We begin with the raw amino-acid sequence, 1135 residues long: Nonribosomal peptide synthetase 9 (1135 aa).

Positions 23-77 are condensation 1; that stretch reads TKQITTATYIKLAWAVVISCNTGSNDTVFGITVNGRGAPIDGAGEMTGATIATIP. The segment at 177-562 is adenylation; that stretch reads SYAELIRSAN…RRIDEIQEAT (386 aa). The interval 485-507 is disordered; it reads GPSPPVGRSSSNRAGSGRCAMGS. A compositionally biased stretch (low complexity) spans 491–502; sequence GRSSSNRAGSGR. A Carrier domain is found at 672 to 748; sequence APSNRVEQDL…AIANKIGDVQ (77 aa). An O-(pantetheine 4'-phosphoryl)serine modification is found at Ser709. The interval 746–999 is condensation 2; the sequence is DVQRAAIKLV…TTLWPVVAQV (254 aa).

Belongs to the NRP synthetase family.

Its function is as follows. Nonribosomal peptide synthesis (NRPS) is a key mechanism responsible for the biosynthesis of bioactive metabolites which are potentially contributing to organismal virulence. In Aspergillus fumigatus (strain ATCC MYA-4609 / CBS 101355 / FGSC A1100 / Af293) (Neosartorya fumigata), this protein is Nonribosomal peptide synthetase 9 (NRPS9).